We begin with the raw amino-acid sequence, 320 residues long: Polynucleotide 5'-triphosphatase CTL1 (320 aa).

Positions 1–12 (MSDQPETPSNSR) are enriched in polar residues. A disordered region spans residues 1 to 23 (MSDQPETPSNSRNSHENVGAKKA). Residues 13–23 (NSHENVGAKKA) are compositionally biased toward basic and acidic residues.

The protein belongs to the fungal TPase family. Requires Mg(2+) as cofactor. The cofactor is Mn(2+).

The protein localises to the cytoplasm. It localises to the nucleus. It carries out the reaction a 5'-end triphospho-ribonucleoside in mRNA + H2O = a 5'-end diphospho-ribonucleoside in mRNA + phosphate + H(+). In terms of biological role, probably involved in an RNA processing event other than mRNA capping. Releases gamma-phosphate from the 5'-end of RNA to produce a diphosphate terminus. In Saccharomyces cerevisiae (strain ATCC 204508 / S288c) (Baker's yeast), this protein is Polynucleotide 5'-triphosphatase CTL1.